Reading from the N-terminus, the 247-residue chain is ATP synthase subunit a, chloroplastic (247 aa).

5 helical membrane-spanning segments follow: residues 38 to 58, 95 to 115, 134 to 154, 199 to 219, and 220 to 240; these read QVLI…SIAV, VPFI…GALL, INTT…AGLS, LVVV…VMFL, and GLFT…AYIG.

Belongs to the ATPase A chain family. F-type ATPases have 2 components, CF(1) - the catalytic core - and CF(0) - the membrane proton channel. CF(1) has five subunits: alpha(3), beta(3), gamma(1), delta(1), epsilon(1). CF(0) has four main subunits: a, b, b' and c.

It is found in the plastid. The protein resides in the chloroplast thylakoid membrane. In terms of biological role, key component of the proton channel; it plays a direct role in the translocation of protons across the membrane. This chain is ATP synthase subunit a, chloroplastic, found in Oenothera argillicola (Appalachian evening primrose).